The following is a 272-amino-acid chain: Large ribosomal subunit protein uL4 (272 aa).

This sequence belongs to the universal ribosomal protein uL4 family. In terms of assembly, part of the 50S ribosomal subunit.

One of the primary rRNA binding proteins, this protein initially binds near the 5'-end of the 23S rRNA. It is important during the early stages of 50S assembly. It makes multiple contacts with different domains of the 23S rRNA in the assembled 50S subunit and ribosome. In terms of biological role, forms part of the polypeptide exit tunnel. The sequence is that of Large ribosomal subunit protein uL4 from Aeropyrum pernix (strain ATCC 700893 / DSM 11879 / JCM 9820 / NBRC 100138 / K1).